The following is a 173-amino-acid chain: Crossover junction endodeoxyribonuclease RuvC (173 aa).

Catalysis depends on residues D8, E67, and D139. The Mg(2+) site is built by D8, E67, and D139.

The protein belongs to the RuvC family. As to quaternary structure, homodimer which binds Holliday junction (HJ) DNA. The HJ becomes 2-fold symmetrical on binding to RuvC with unstacked arms; it has a different conformation from HJ DNA in complex with RuvA. In the full resolvosome a probable DNA-RuvA(4)-RuvB(12)-RuvC(2) complex forms which resolves the HJ. Mg(2+) serves as cofactor.

The protein resides in the cytoplasm. It catalyses the reaction Endonucleolytic cleavage at a junction such as a reciprocal single-stranded crossover between two homologous DNA duplexes (Holliday junction).. Functionally, the RuvA-RuvB-RuvC complex processes Holliday junction (HJ) DNA during genetic recombination and DNA repair. Endonuclease that resolves HJ intermediates. Cleaves cruciform DNA by making single-stranded nicks across the HJ at symmetrical positions within the homologous arms, yielding a 5'-phosphate and a 3'-hydroxyl group; requires a central core of homology in the junction. The consensus cleavage sequence is 5'-(A/T)TT(C/G)-3'. Cleavage occurs on the 3'-side of the TT dinucleotide at the point of strand exchange. HJ branch migration catalyzed by RuvA-RuvB allows RuvC to scan DNA until it finds its consensus sequence, where it cleaves and resolves the cruciform DNA. This Baumannia cicadellinicola subsp. Homalodisca coagulata protein is Crossover junction endodeoxyribonuclease RuvC.